Reading from the N-terminus, the 20-residue chain is Thrombin-like enzyme okinaxobin-2 (20 aa).

In terms of domain architecture, Peptidase S1 spans 1 to 20; it reads VVGGDECNINEHRFLVALYY.

It belongs to the peptidase S1 family. Snake venom subfamily. As to quaternary structure, monomer. In terms of processing, glycosylated. In terms of tissue distribution, expressed by the venom gland.

The protein resides in the secreted. Its activity is regulated as follows. Strongly inactivated by diisopropylfluorophosphate (DFP) and to a lesser extent by tosyl-L-lysine chloromethyl ketone (TLCK). In terms of biological role, thrombin-like snake venom serine protease. Releases both fibrinopeptides A and B from fibrinogen (FGA and FGB) to form fibrin clots. The chain is Thrombin-like enzyme okinaxobin-2 from Ovophis okinavensis (Ryukyu Island pit viper).